A 259-amino-acid chain; its full sequence is MKRICLLALITTMSGCAMLEPIETDEVTQATTVVDAVEGDKSKDESSGIVDTLRGRNDPVAGDPAWAPIHPKQKPEHYAAATGSLFSPEHITDLYDDSKPRGIGDIITVTLDETTSATKSANADLSKTNEAQMDPLQVGGEELKVGGKYNFSYDLNNTNTFAGDSSAKQSNSISGYITVEVIEVLANGNLVIRGEKWMTLNTGDEYIRLSGTIRPDDINFDNTIASNRVSNARIQYSGTGLSQDMQEPGFLARFFNVAL.

An N-terminal signal peptide occupies residues 1–15; it reads MKRICLLALITTMSG. Cys16 carries N-palmitoyl cysteine lipidation. A lipid anchor (S-diacylglycerol cysteine) is attached at Cys16. The tract at residues 38-63 is disordered; sequence EGDKSKDESSGIVDTLRGRNDPVAGD.

It belongs to the FlgH family. As to quaternary structure, the basal body constitutes a major portion of the flagellar organelle and consists of four rings (L,P,S, and M) mounted on a central rod.

It localises to the cell outer membrane. The protein localises to the bacterial flagellum basal body. In terms of biological role, assembles around the rod to form the L-ring and probably protects the motor/basal body from shearing forces during rotation. The chain is Flagellar L-ring protein 1 (flgH1) from Vibrio parahaemolyticus serotype O3:K6 (strain RIMD 2210633).